Reading from the N-terminus, the 274-residue chain is CTO1 family protein C17G9.12c (274 aa).

It belongs to the CTO1 family.

The protein localises to the cytoplasm. Its subcellular location is the nucleus. The protein is CTO1 family protein C17G9.12c of Schizosaccharomyces pombe (strain 972 / ATCC 24843) (Fission yeast).